The primary structure comprises 86 residues: Large ribosomal subunit protein eL20 (86 aa).

Belongs to the eukaryotic ribosomal protein eL20 family. In terms of assembly, part of the 50S ribosomal subunit. Binds 23S rRNA.

The chain is Large ribosomal subunit protein eL20 from Saccharolobus solfataricus (strain ATCC 35092 / DSM 1617 / JCM 11322 / P2) (Sulfolobus solfataricus).